A 345-amino-acid chain; its full sequence is Ferrochelatase (345 aa).

The Fe cation site is built by histidine 215 and glutamate 296.

Belongs to the ferrochelatase family.

The protein resides in the cytoplasm. It catalyses the reaction heme b + 2 H(+) = protoporphyrin IX + Fe(2+). It participates in porphyrin-containing compound metabolism; protoheme biosynthesis; protoheme from protoporphyrin-IX: step 1/1. Functionally, catalyzes the ferrous insertion into protoporphyrin IX. Essential for normal nodule development. This Bradyrhizobium diazoefficiens (strain JCM 10833 / BCRC 13528 / IAM 13628 / NBRC 14792 / USDA 110) protein is Ferrochelatase.